The primary structure comprises 635 residues: Cerevisin (635 aa).

The signal sequence occupies residues 1 to 19; sequence MKLENTLFTLGALGSISAA. The propeptide occupies 20–280; the sequence is LVIPNLENAA…VERDSIVEAT (261 aa). 4 stretches are compositionally biased toward basic and acidic residues: residues 35–50, 74–85, 94–109, and 126–136; these read INKE…VEFT, KGQDKESPEFNG, SAHE…HESS, and GCHENKVEEKK. Positions 35–155 are disordered; it reads INKEDHHERP…KHHEKTLEKG (121 aa). Residues 137–155 are compositionally biased toward basic residues; it reads MKGKKVKGKKHHEKTLEKG. One can recognise an Inhibitor I9 domain in the interval 182–278; that stretch reads RYIIVFKRGA…DFVERDSIVE (97 aa). The Peptidase S8 domain occupies 289 to 614; sequence PWGLARISHR…KQELNMDEFI (326 aa). Active-site charge relay system residues include Asp325 and His357. A disulfide bond links Cys460 and Cys491. Catalysis depends on Ser519, which acts as the Charge relay system. A propeptide spanning residues 575–635 is cleaved from the precursor; the sequence is DTPNVLIYNG…RDILDKLNII (61 aa). An N-linked (GlcNAc...) asparagine glycan is attached at Asn594.

This sequence belongs to the peptidase S8 family. Post-translationally, activated by N- and C-terminal proteolytic cleavage. Protease B (PrB/PRB1) processing requires at least 4 cleavages. First, the signal peptide is removed from the 76 kDa preproprotease B by signal peptidase in the ER. Then, PrB removes its own Pro-region (in trans) at the N-terminus, producing a 39 kDa form before exiting the ER. In the Golgi complex, the C-terminal Post-region of the 40 kDa proprotease B undergoes protease A (PrA/PEP4)-mediated processing to a 37 kDa intermediate, which in turn is quickly processed again by PrB in trans to yield the 31 kDa mature PrB. In terms of processing, glycosylated. Preproprotease B is a 76 kDa unglycosylated precursor that enters the endoplasmic reticulum (ER), where it receives one Asn-linked and an undetermined number of non-Asn-linked carbohydrate side chains. In the Golgi complex, the 39 kDa form becomes 40 kDa, due to elaboration of the Asn-linked side chain. The ultimate processing step removes a peptide containing the Asn-linked chain. Mature PrB has only non-Asn-linked carbohydrates.

The protein localises to the vacuole. It catalyses the reaction Hydrolysis of proteins with broad specificity, and of Bz-Arg-OEt &gt; Ac-Tyr-OEt. Does not hydrolyze peptide amides.. Functionally, vacuolar proteinase B involved in protein degradation in the vacuole. Among other substrates, acts on carboxypeptidase Y (cpY/PRC1) to activate it by processing its Pro-peptide. Required for meiosis and spore formation, and for optimal survival in stationary phase. This Saccharomyces cerevisiae (strain ATCC 204508 / S288c) (Baker's yeast) protein is Cerevisin (PRB1).